Reading from the N-terminus, the 158-residue chain is uncharacterized protein (158 aa).

A run of 4 helical transmembrane segments spans residues 12-32 (IITL…AVVV), 39-59 (LDIL…SLSV), 90-110 (LIYL…FNTI), and 113-133 (IIST…WLPL).

The protein resides in the cell membrane. This is an uncharacterized protein from Mycoplasma genitalium (strain ATCC 33530 / DSM 19775 / NCTC 10195 / G37) (Mycoplasmoides genitalium).